Here is a 432-residue protein sequence, read N- to C-terminus: MRVVILGSGVVGVTSAWYLSQAGHDVTVIDREPGPALETSAANAGQISPGYAAPWAAPGVPLKAIKWMFQRHAPLAVRLDGTQFQLKWMWQMLRNCDTSHYMENKGRMVRLAEYSRDCLKELRAATGIEYEGRQGGTLQLFRTEQQFENATRDIAVLEDAGVPYQLLESNRLAEVEPALAAVAHKLTGGLRLPNDETGDCQLFTQRLAQMAEQAGVKFRFNTPVDKLLFEGEQIYGVKCGDEVIKADAYVMAFGSYSTAMLKGIVDIPVYPLKGYSLTIPVANEDGAPVSTILDETYKIAITRFDNRIRVGGMAEIVGFNTELLQPRRETLEMVVRDLYPRGGHIEQATFWTGLRPMTPDGTPVVGRTSFKNLWLNTGHGTLGWTMACGSGQLLSDILSGRTPAIPYDDLSVARYSSGFSPARPRHLHGVHN.

Residue 3–17 (VVILGSGVVGVTSAW) participates in FAD binding.

This sequence belongs to the DadA oxidoreductase family. It depends on FAD as a cofactor.

The enzyme catalyses a D-alpha-amino acid + A + H2O = a 2-oxocarboxylate + AH2 + NH4(+). Its pathway is amino-acid degradation; D-alanine degradation; NH(3) and pyruvate from D-alanine: step 1/1. Functionally, oxidative deamination of D-amino acids. The chain is D-amino acid dehydrogenase from Escherichia fergusonii (strain ATCC 35469 / DSM 13698 / CCUG 18766 / IAM 14443 / JCM 21226 / LMG 7866 / NBRC 102419 / NCTC 12128 / CDC 0568-73).